The chain runs to 388 residues: Putative 8-amino-7-oxononanoate synthase (388 aa).

Arg23 contacts substrate. 110–111 serves as a coordination point for pyridoxal 5'-phosphate; that stretch reads GY. His135 is a binding site for substrate. Residues Ser182, 207–210, and 238–241 contribute to the pyridoxal 5'-phosphate site; these read DDAH and TLSK. At Lys241 the chain carries N6-(pyridoxal phosphate)lysine. Thr355 provides a ligand contact to substrate.

The protein belongs to the class-II pyridoxal-phosphate-dependent aminotransferase family. BioF subfamily. In terms of assembly, homodimer. Requires pyridoxal 5'-phosphate as cofactor.

It catalyses the reaction 6-carboxyhexanoyl-[ACP] + L-alanine + H(+) = (8S)-8-amino-7-oxononanoate + holo-[ACP] + CO2. It participates in cofactor biosynthesis; biotin biosynthesis. Its function is as follows. Catalyzes the decarboxylative condensation of pimeloyl-[acyl-carrier protein] and L-alanine to produce 8-amino-7-oxononanoate (AON), [acyl-carrier protein], and carbon dioxide. The sequence is that of Putative 8-amino-7-oxononanoate synthase (bioF) from Thermodesulfovibrio yellowstonii (strain ATCC 51303 / DSM 11347 / YP87).